The following is a 319-amino-acid chain: Transaldolase (319 aa).

The active-site Schiff-base intermediate with substrate is Lys-126.

Belongs to the transaldolase family. Type 1 subfamily. As to quaternary structure, homodimer.

It localises to the cytoplasm. The enzyme catalyses D-sedoheptulose 7-phosphate + D-glyceraldehyde 3-phosphate = D-erythrose 4-phosphate + beta-D-fructose 6-phosphate. It functions in the pathway carbohydrate degradation; pentose phosphate pathway; D-glyceraldehyde 3-phosphate and beta-D-fructose 6-phosphate from D-ribose 5-phosphate and D-xylulose 5-phosphate (non-oxidative stage): step 2/3. Its function is as follows. Transaldolase is important for the balance of metabolites in the pentose-phosphate pathway. This Bordetella avium (strain 197N) protein is Transaldolase.